A 306-amino-acid polypeptide reads, in one-letter code: Acetyl-coenzyme A carboxylase carboxyl transferase subunit beta (306 aa).

One can recognise a CoA carboxyltransferase N-terminal domain in the interval 27–296; that stretch reads LWHKCPSCDA…PRFVAPVIEP (270 aa). Zn(2+)-binding residues include cysteine 31, cysteine 34, cysteine 50, and cysteine 53. Residues 31 to 53 form a C4-type zinc finger; that stretch reads CPSCDAVLYRPELEKTLDVCPKC.

Belongs to the AccD/PCCB family. In terms of assembly, acetyl-CoA carboxylase is a heterohexamer composed of biotin carboxyl carrier protein (AccB), biotin carboxylase (AccC) and two subunits each of ACCase subunit alpha (AccA) and ACCase subunit beta (AccD). The cofactor is Zn(2+).

The protein resides in the cytoplasm. It carries out the reaction N(6)-carboxybiotinyl-L-lysyl-[protein] + acetyl-CoA = N(6)-biotinyl-L-lysyl-[protein] + malonyl-CoA. It participates in lipid metabolism; malonyl-CoA biosynthesis; malonyl-CoA from acetyl-CoA: step 1/1. Its function is as follows. Component of the acetyl coenzyme A carboxylase (ACC) complex. Biotin carboxylase (BC) catalyzes the carboxylation of biotin on its carrier protein (BCCP) and then the CO(2) group is transferred by the transcarboxylase to acetyl-CoA to form malonyl-CoA. The chain is Acetyl-coenzyme A carboxylase carboxyl transferase subunit beta from Pseudomonas syringae pv. tomato (strain ATCC BAA-871 / DC3000).